The sequence spans 463 residues: Glutamyl-tRNA reductase (463 aa).

Residues 49 to 52 (TCNR), Ser109, 114 to 116 (EQQ), and Gln120 each bind substrate. Cys50 (nucleophile) is an active-site residue. Residue 196 to 201 (GAGAMS) participates in NADP(+) binding.

The protein belongs to the glutamyl-tRNA reductase family. Homodimer.

It carries out the reaction (S)-4-amino-5-oxopentanoate + tRNA(Glu) + NADP(+) = L-glutamyl-tRNA(Glu) + NADPH + H(+). It functions in the pathway porphyrin-containing compound metabolism; protoporphyrin-IX biosynthesis; 5-aminolevulinate from L-glutamyl-tRNA(Glu): step 1/2. In terms of biological role, catalyzes the NADPH-dependent reduction of glutamyl-tRNA(Glu) to glutamate 1-semialdehyde (GSA). This is Glutamyl-tRNA reductase from Corynebacterium glutamicum (strain R).